Here is a 310-residue protein sequence, read N- to C-terminus: MSVDSVYKYIVFDVIRNIKSNIKNDSDTENVDESIIDEIQTMWLDRLTQTGAISNQNDPDETTATTTTTQPQSTLSTVEHENVRNTLNSLIQLNNKSQTTTTTTTSTFGNPQQYLPPQKEVSNGTSPTMNSSNGSNNNNNNNNSNNSSNSSNNNNLPSSLRSIMNPMPQNDGTLDESDNDDDNNNNNNDNDNENNKDNIDKLIIDGFKKNFNFNGDEVIPQNDGLNDDDDLDDEEIGGGGGKVEEDSLGSDLDDDDDDDPDPIIEHFVLCQYEKVSRIKNKRKCNFKDGIMHLNGKDTLFNKANGEMIWN.

3 disordered regions span residues 52-78 (AISN…LSTV), 91-197 (IQLN…NNKD), and 218-261 (VIPQ…DDPD). Composition is skewed to low complexity over residues 62 to 77 (TTAT…TLST) and 122 to 160 (SNGT…PSSL). Acidic residues-rich tracts occupy residues 173–183 (TLDESDNDDDN), 225–236 (LNDDDDLDDEEI), and 246–261 (DSLG…DDPD).

Belongs to the TFIIA subunit 1 family. As to quaternary structure, TFIIA is a heterodimer of the large subunit 1 and a small subunit gamma.

It is found in the nucleus. Its function is as follows. TFIIA is a component of the transcription machinery of RNA polymerase II and plays an important role in transcriptional activation. TFIIA in a complex with tbp mediates transcriptional activity. The protein is Transcription initiation factor IIA subunit 1 (gtf2a1) of Dictyostelium discoideum (Social amoeba).